A 281-amino-acid polypeptide reads, in one-letter code: NADPH-dependent 7-cyano-7-deazaguanine reductase (281 aa).

88–90 contacts substrate; it reads VES. NADPH is bound at residue 90–91; that stretch reads SK. Catalysis depends on Cys189, which acts as the Thioimide intermediate. Asp196 (proton donor) is an active-site residue. 228-229 provides a ligand contact to substrate; the sequence is HE. 257–258 is a binding site for NADPH; sequence RG.

Belongs to the GTP cyclohydrolase I family. QueF type 2 subfamily. As to quaternary structure, homodimer.

The protein localises to the cytoplasm. The enzyme catalyses 7-aminomethyl-7-carbaguanine + 2 NADP(+) = 7-cyano-7-deazaguanine + 2 NADPH + 3 H(+). The protein operates within tRNA modification; tRNA-queuosine biosynthesis. Catalyzes the NADPH-dependent reduction of 7-cyano-7-deazaguanine (preQ0) to 7-aminomethyl-7-deazaguanine (preQ1). The chain is NADPH-dependent 7-cyano-7-deazaguanine reductase from Klebsiella pneumoniae (strain 342).